A 567-amino-acid polypeptide reads, in one-letter code: Malate synthase, glyoxysomal (567 aa).

Arg182 acts as the Proton acceptor in catalysis. Catalysis depends on Asp468, which acts as the Proton donor. The Microbody targeting signal signature appears at 565–567 (SRL).

The protein belongs to the malate synthase family.

The protein resides in the glyoxysome. The enzyme catalyses glyoxylate + acetyl-CoA + H2O = (S)-malate + CoA + H(+). It functions in the pathway carbohydrate metabolism; glyoxylate cycle; (S)-malate from isocitrate: step 2/2. The protein is Malate synthase, glyoxysomal of Ricinus communis (Castor bean).